Reading from the N-terminus, the 115-residue chain is DNA-binding protein STK_13740 (115 aa).

Belongs to the PDCD5 family.

In Sulfurisphaera tokodaii (strain DSM 16993 / JCM 10545 / NBRC 100140 / 7) (Sulfolobus tokodaii), this protein is DNA-binding protein STK_13740.